Here is a 405-residue protein sequence, read N- to C-terminus: Acetate kinase (405 aa).

Residue Asn-7 participates in Mg(2+) binding. Lys-14 contributes to the ATP binding site. Arg-90 contacts substrate. Asp-147 (proton donor/acceptor) is an active-site residue. ATP is bound by residues 207 to 211 (HLGNG), 282 to 284 (DFR), and 331 to 335 (GVGEN). Glu-384 is a binding site for Mg(2+).

The protein belongs to the acetokinase family. Homodimer. The cofactor is Mg(2+). Mn(2+) serves as cofactor.

The protein resides in the cytoplasm. The enzyme catalyses acetate + ATP = acetyl phosphate + ADP. Its pathway is metabolic intermediate biosynthesis; acetyl-CoA biosynthesis; acetyl-CoA from acetate: step 1/2. Catalyzes the formation of acetyl phosphate from acetate and ATP. Can also catalyze the reverse reaction. This is Acetate kinase from Clostridium kluyveri (strain ATCC 8527 / DSM 555 / NBRC 12016 / NCIMB 10680 / K1).